The primary structure comprises 422 residues: Multifunctional CCA protein (422 aa).

2 residues coordinate ATP: G8 and R11. G8 and R11 together coordinate CTP. Positions 21 and 23 each coordinate Mg(2+). ATP contacts are provided by R91, R137, and R140. Residues R91, R137, and R140 each coordinate CTP. One can recognise an HD domain in the interval 228 to 329 (TGLHSLMALE…VKLLQSCDAW (102 aa)). The segment at 403–422 (FKQDNAPEAQEKGGEDVGLT) is disordered.

This sequence belongs to the tRNA nucleotidyltransferase/poly(A) polymerase family. Bacterial CCA-adding enzyme type 1 subfamily. In terms of assembly, monomer. Can also form homodimers and oligomers. Requires Mg(2+) as cofactor. The cofactor is Ni(2+).

It carries out the reaction a tRNA precursor + 2 CTP + ATP = a tRNA with a 3' CCA end + 3 diphosphate. The enzyme catalyses a tRNA with a 3' CCA end + 2 CTP + ATP = a tRNA with a 3' CCACCA end + 3 diphosphate. In terms of biological role, catalyzes the addition and repair of the essential 3'-terminal CCA sequence in tRNAs without using a nucleic acid template. Adds these three nucleotides in the order of C, C, and A to the tRNA nucleotide-73, using CTP and ATP as substrates and producing inorganic pyrophosphate. tRNA 3'-terminal CCA addition is required both for tRNA processing and repair. Also involved in tRNA surveillance by mediating tandem CCA addition to generate a CCACCA at the 3' terminus of unstable tRNAs. While stable tRNAs receive only 3'-terminal CCA, unstable tRNAs are marked with CCACCA and rapidly degraded. This is Multifunctional CCA protein from Hahella chejuensis (strain KCTC 2396).